The following is a 1055-amino-acid chain: MKDQGSSGVSPAPGEGEKKAINSELWHACAGPLVSLPPVGSLVVYFPQGHSEQVAASMHKELDNIPGYPSLPSKLICKLLSLTLHADSETDEVYAQMTLQPVNKYDRDAMLASELGLKQNKQPAEFFCKTLTASDTSTHGGFSVPRRAAEKIFPPLDFTMQPPAQELIAKDLHDISWKFRHIYRGQPKRHLLTTGWSVFVSTKRLLAGDSVLFIRDEKSQLLLGIRRATRPQPALSSSVLSSDSMHIGILAAAAHAAANSSPFTIFYNPRASPSEFVIPLAKYNKALYTQVSLGMRFRMLFETEDSGVRRYMGTITGIGDLDPVRWKNSHWRNLQVGWDESTASERRTRVSIWEIEPVATPFYICPPPFFRPKLPKQPGMPDDENEVESAFKRAMPWLADDFALKDVQSALFPGLSLVQWMAMQQNPQMLTAASQTVQSPYLNSNALAMQDVMGSSNEDPTKRLNTQAQNMVLPNLQVGSKVDHPVMSQHQQQPHQLSQQQQVQPSQQSSVVLQQHQAQLLQQNAIHLQQQQEHLQRQQSQPAQQLKAASSLHSVEQHKLKEQTSGGQVASQAQMLNQIFPPSSSQLQQLGLPKSPTHRQGLTGLPIAGSLQQPTLTQTSQVQQAAEYQQALLQSQQQQQQLQLQQLSQPEVQLQLLQKIQQQNMLSQLNPQHQSQLIQQLSQKSQEILQQQILQHQFGGSDSIGQLKQSPSQQAPLNHMTGSLTPQQLVRSHSALAESGDPSSSTAPSTSRISPINSLSRANQGSRNLTDMVATPQIDNLLQEIQSKPDNRIKNDIQSKETVPIHNRHPVSDQLDASSATSFCLDESPREGFSFPPVCLDNNVQVDPRDNFLIAENVDALMPDALLSRGMASGKGMCTLTSGQRDHRDVENELSSAAFSSQSFGVPDMSFKPGCSSDVAVTDAGMPSQGLWNNQTQRMRTFTKVQKRGSVGRSIDITRYRDYDELRHDLACMFGIQGQLEDPYRMDWKLVYVDHENDILLVGDDPWEEFVGCVKSIKILSAAEVQQMSLDGDLGGVPPQTQACSASDDANAWRG.

A DNA-binding region (TF-B3) is located at residues 127 to 229 (FCKTLTASDT…QLLLGIRRAT (103 aa)). Disordered stretches follow at residues 485–510 (PVMS…QQSS), 532–565 (QEHL…EQTS), 585–609 (SQLQ…PIAG), 701–720 (SDSI…LNHM), and 732–769 (SHSA…SRNL). Low complexity-rich tracts occupy residues 488-510 (SQHQ…QQSS) and 532-552 (QEHL…ASSL). Low complexity predominate over residues 742-756 (PSSSTAPSTSRISPI). Residues 757-769 (NSLSRANQGSRNL) show a composition bias toward polar residues. The PB1 domain occupies 940-1024 (RTFTKVQKRG…KSIKILSAAE (85 aa)). Residues 1034 to 1055 (LGGVPPQTQACSASDDANAWRG) are disordered.

This sequence belongs to the ARF family. Homodimers and heterodimers. Expressed in roots, culms, leaves and young panicles.

It localises to the nucleus. Auxin response factors (ARFs) are transcriptional factors that bind specifically to the DNA sequence 5'-TGTCTC-3' found in the auxin-responsive promoter elements (AuxREs). The protein is Auxin response factor 16 (ARF16) of Oryza sativa subsp. japonica (Rice).